The following is a 265-amino-acid chain: 4-hydroxy-tetrahydrodipicolinate reductase (265 aa).

9–14 (GARGKM) contributes to the NAD(+) binding site. Lys-37 serves as a coordination point for NADP(+). NAD(+) is bound by residues 99–101 (GTT) and 125–128 (APNF). Catalysis depends on His-155, which acts as the Proton donor/acceptor. (S)-2,3,4,5-tetrahydrodipicolinate is bound at residue His-156. The active-site Proton donor is Lys-159. A (S)-2,3,4,5-tetrahydrodipicolinate-binding site is contributed by 165 to 166 (GT).

It belongs to the DapB family.

The protein resides in the cytoplasm. It carries out the reaction (S)-2,3,4,5-tetrahydrodipicolinate + NAD(+) + H2O = (2S,4S)-4-hydroxy-2,3,4,5-tetrahydrodipicolinate + NADH + H(+). It catalyses the reaction (S)-2,3,4,5-tetrahydrodipicolinate + NADP(+) + H2O = (2S,4S)-4-hydroxy-2,3,4,5-tetrahydrodipicolinate + NADPH + H(+). It participates in amino-acid biosynthesis; L-lysine biosynthesis via DAP pathway; (S)-tetrahydrodipicolinate from L-aspartate: step 4/4. Functionally, catalyzes the conversion of 4-hydroxy-tetrahydrodipicolinate (HTPA) to tetrahydrodipicolinate. This is 4-hydroxy-tetrahydrodipicolinate reductase from Lysinibacillus sphaericus (strain C3-41).